A 241-amino-acid polypeptide reads, in one-letter code: Eukaryotic translation initiation factor 3 subunit J (241 aa).

Positions 1 to 94 are disordered; that stretch reads MDVSWDADNF…EKTAEEMTPE (94 aa). Positions 26 to 45 are enriched in acidic residues; it reads GEDEDDNVKESWEDEEEEKK. Residues 61-118 are a coiled coil; the sequence is KKKIHDKIAERERQEREKAERLVTEKTAEEMTPEQKLAEKLRQQKLQEESDLRLAMET. A compositionally biased stretch (basic and acidic residues) spans 66 to 89; the sequence is DKIAERERQEREKAERLVTEKTAE.

It belongs to the eIF-3 subunit J family. As to quaternary structure, component of the eukaryotic translation initiation factor 3 (eIF-3) complex.

Its subcellular location is the cytoplasm. Functionally, component of the eukaryotic translation initiation factor 3 (eIF-3) complex, which is involved in protein synthesis of a specialized repertoire of mRNAs and, together with other initiation factors, stimulates binding of mRNA and methionyl-tRNAi to the 40S ribosome. The eIF-3 complex specifically targets and initiates translation of a subset of mRNAs involved in cell proliferation. The polypeptide is Eukaryotic translation initiation factor 3 subunit J (Bombyx mori (Silk moth)).